The following is a 170-amino-acid chain: Acetyl-CoA decarbonylase/synthase complex subunit epsilon 1 (170 aa).

This sequence belongs to the CdhB family. Heterotetramer of two alpha and two epsilon subunits. The ACDS complex is made up of alpha, epsilon, beta, gamma and delta subunits with a probable stoichiometry of (alpha(2)epsilon(2))(4)-beta(8)-(gamma(1)delta(1))(8).

It participates in one-carbon metabolism; methanogenesis from acetate. In terms of biological role, part of a complex that catalyzes the reversible cleavage of acetyl-CoA, allowing growth on acetate as sole source of carbon and energy. The alpha-epsilon subcomponent functions as a carbon monoxide dehydrogenase. The precise role of the epsilon subunit is unclear; it may have a stabilizing role within the alpha(2)epsilon(2) component and/or be involved in electron transfer to FAD during a potential FAD-mediated CO oxidation. This chain is Acetyl-CoA decarbonylase/synthase complex subunit epsilon 1 (cdhB1), found in Methanosarcina acetivorans (strain ATCC 35395 / DSM 2834 / JCM 12185 / C2A).